The chain runs to 287 residues: Melatonin receptor type 1B-A (287 aa).

Residues 1-28 are Extracellular-facing; the sequence is MPENVSLIRNRTEVGQGRAWGSGAGARP. Asn-4 and Asn-10 each carry an N-linked (GlcNAc...) asparagine glycan. Residues 29–49 traverse the membrane as a helical segment; the sequence is AWVVMVLAGVLIFTSVVDVLG. Over 50–69 the chain is Cytoplasmic; sequence NVLVIISVLRNRKLRNAGNA. The helical transmembrane segment at 70–90 threads the bilayer; that stretch reads FVVSLAFADLLVVCYPYPLVL. At 91-107 the chain is on the extracellular side; it reads HAMLHAGWLPGEMECKV. Cys-105 and Cys-182 are oxidised to a cystine. The chain crosses the membrane as a helical span at residues 108-128; sequence SGFLMGASVIGSIFNITAIAI. The Cytoplasmic segment spans residues 129 to 149; the sequence is NRYCFICQANTYEKIYGRAGT. Residues 150-170 form a helical membrane-spanning segment; the sequence is LVLLTLVWVLTAIAILPNLSL. The Extracellular portion of the chain corresponds to 171-192; that stretch reads GSLTYDPRVYSCTFSQTTSAGY. A helical transmembrane segment spans residues 193-213; the sequence is TIAVVTVHFLLPIAVVTFCYL. At 214–245 the chain is on the cytoplasmic side; sequence RIWVLVLRVRRRVTTDVRPRLRPSELRHFLTM. A helical membrane pass occupies residues 246–266; it reads FVVFVLFAVCWAPLNLIGLAV. At 267–275 the chain is on the extracellular side; the sequence is AVDPPRVGP. The chain crosses the membrane as a helical span at residues 276–287; the sequence is LVPDWLFVMSYF.

Belongs to the G-protein coupled receptor 1 family.

The protein resides in the cell membrane. Functionally, high affinity receptor for melatonin. The activity of this receptor is mediated by pertussis toxin sensitive G proteins that inhibits adenylate cyclase activity. In Danio rerio (Zebrafish), this protein is Melatonin receptor type 1B-A (mtnr1ba).